Here is a 359-residue protein sequence, read N- to C-terminus: Alanine racemase (359 aa).

Lys35 (proton acceptor; specific for D-alanine) is an active-site residue. Lys35 is subject to N6-(pyridoxal phosphate)lysine. Arg131 serves as a coordination point for substrate. Tyr253 serves as the catalytic Proton acceptor; specific for L-alanine. Residue Met301 coordinates substrate.

Belongs to the alanine racemase family. Pyridoxal 5'-phosphate serves as cofactor.

It catalyses the reaction L-alanine = D-alanine. The protein operates within amino-acid biosynthesis; D-alanine biosynthesis; D-alanine from L-alanine: step 1/1. In terms of biological role, catalyzes the interconversion of L-alanine and D-alanine. May also act on other amino acids. In Laribacter hongkongensis (strain HLHK9), this protein is Alanine racemase (alr).